The chain runs to 85 residues: Coiled-coil-helix-coiled-coil-helix domain-containing protein 7 (85 aa).

A CHCH domain is found at 13 to 55; sequence SNPCLEETDASTKCMDDNRYEKDLCTPYFVKYKNCRKFWNGIM. 2 short sequence motifs (cx9C motif) span residues 16-26 and 37-47; these read CLEETDASTKC and CTPYFVKYKNC. 2 cysteine pairs are disulfide-bonded: C16–C47 and C26–C37.

The protein belongs to the CHCHD7 family.

It localises to the mitochondrion intermembrane space. In Xenopus tropicalis (Western clawed frog), this protein is Coiled-coil-helix-coiled-coil-helix domain-containing protein 7 (chchd7).